A 206-amino-acid polypeptide reads, in one-letter code: Potassium channel B446_29190 (206 aa).

Residue methionine 1 is a topological domain, cytoplasmic. A helical membrane pass occupies residues 2–25 (NESGRVEAFSDGVFAIAITLLILD). The RxxxFSD motif signature appears at 6–12 (RVEAFSD). Topologically, residues 26–44 (IKVPKADGPGGLWHALGAQ) are extracellular. Positions 31 to 34 (ADGP) are short helix H1. The interval 36 to 42 (GLWHALG) is short helix H2. A helical membrane pass occupies residues 45-70 (WPSYAAYVVSFLVIGIMWVNHHQVFS). Topologically, residues 71 to 76 (YVARVD) are cytoplasmic. The helical transmembrane segment at 77 to 102 (RALMFLNLLVLMVVAAVPWPTAMLAE) threads the bilayer. The Extracellular segment spans residues 103 to 110 (YLREDRAS). The helical transmembrane segment at 111–135 (HVAAAVYSLVMVAMALAFQALWWHL) threads the bilayer. The Cytoplasmic portion of the chain corresponds to 136–147 (TRTGHLFDPRVD). The chain crosses the membrane as a helical span at residues 148–174 (APAARATRIRFALGSLGYPLTVGLAFV). The Extracellular segment spans residues 175-176 (SA). Residues 177-192 (PLTLAAHGLLALYYGF) traverse the membrane as a helical segment. Topologically, residues 193–206 (NQVPVPTREAAAPS) are cytoplasmic.

The protein belongs to the TMEM175 family. In terms of assembly, homotetramer.

The protein resides in the membrane. The enzyme catalyses K(+)(in) = K(+)(out). Functionally, potassium channel. The polypeptide is Potassium channel B446_29190 (Streptomyces collinus (strain DSM 40733 / Tue 365)).